A 569-amino-acid polypeptide reads, in one-letter code: Probable pyruvate decarboxylase Pdc101 (569 aa).

The substrate site is built by Asp33 and His120. At Ser233 the chain carries Phosphoserine. The interval 396–478 (DSWFNGLQMK…FLLNNRGYTI (83 aa)) is thiamine pyrophosphate binding. Residues Asp446, Asn473, and Gly475 each contribute to the Mg(2+) site. Glu479 is a binding site for substrate. Thr521 is subject to Phosphothreonine. Residue Ser522 is modified to Phosphoserine.

Belongs to the TPP enzyme family. Homotetramer. A metal cation serves as cofactor. It depends on thiamine diphosphate as a cofactor.

The enzyme catalyses a 2-oxocarboxylate + H(+) = an aldehyde + CO2. This Schizosaccharomyces pombe (strain 972 / ATCC 24843) (Fission yeast) protein is Probable pyruvate decarboxylase Pdc101 (pdc101).